We begin with the raw amino-acid sequence, 587 residues long: Protein NDNF (587 aa).

Residues 1–24 form the signal peptide; the sequence is MQRSTMLPGVELLLLFLLSTSLHA. N-linked (GlcNAc...) asparagine glycans are attached at residues N109, N129, N190, N321, N334, N459, N498, and N558.

In terms of assembly, binds heparin. Interacts with dally; the interaction promotes dally degradation. Interacts with dpp and gbb.

Its subcellular location is the secreted. It is found in the extracellular space. The protein resides in the extracellular matrix. Secretory protein that acts as a feedback regulator of dpp/BMP, wg and hh signaling pathways. In the developing wing, is a dosage-dependent modulator of dpp/BMP signaling involved in wing growth and crossvein patterning; low levels promote and high levels inhibit dpp/BMP signaling. In the early pupal wing, inhibits dpp/BMP signaling activity to prevent the formation of ectopic crossveins in the posterior compartment. Binds to dpp and gbb to modulate their release and activity decreasing dpp/BMP signaling in the responding cells. During wing development regulates dpp/BMP coreceptor dally availability on the cell surface. Might have a role in testis development. The sequence is that of Protein NDNF from Drosophila melanogaster (Fruit fly).